A 207-amino-acid chain; its full sequence is Pyridoxine/pyridoxamine 5'-phosphate oxidase (207 aa).

FMN-binding positions include 53–58, 68–69, lysine 75, and glutamine 97; these read RMVLLK and YT. Lysine 58 is a binding site for substrate. Residues tyrosine 115, arginine 119, and serine 123 each coordinate substrate. FMN-binding positions include 132 to 133 and tryptophan 177; that span reads QS. Substrate is bound at residue 183–185; that stretch reads RLH. Arginine 187 contributes to the FMN binding site.

The protein belongs to the pyridoxamine 5'-phosphate oxidase family. In terms of assembly, homodimer. FMN is required as a cofactor.

It catalyses the reaction pyridoxamine 5'-phosphate + O2 + H2O = pyridoxal 5'-phosphate + H2O2 + NH4(+). The enzyme catalyses pyridoxine 5'-phosphate + O2 = pyridoxal 5'-phosphate + H2O2. Its pathway is cofactor metabolism; pyridoxal 5'-phosphate salvage; pyridoxal 5'-phosphate from pyridoxamine 5'-phosphate: step 1/1. The protein operates within cofactor metabolism; pyridoxal 5'-phosphate salvage; pyridoxal 5'-phosphate from pyridoxine 5'-phosphate: step 1/1. Catalyzes the oxidation of either pyridoxine 5'-phosphate (PNP) or pyridoxamine 5'-phosphate (PMP) into pyridoxal 5'-phosphate (PLP). This is Pyridoxine/pyridoxamine 5'-phosphate oxidase from Bartonella quintana (strain Toulouse) (Rochalimaea quintana).